Here is a 514-residue protein sequence, read N- to C-terminus: MSGKKAAARLMIQGTSSNVGKSVLAAAFCRIFYQEGYHVAPFKAQNMALNSFITRSGGEMGRAQVVQAQAAGLEPDVRMNPVLLKPTGHTGSQVIVLGKAQGTLSALKYHGDYQRKTWPIVEEALHELLEEHEIVVIEGAGSPAEVNLKQNDIVNMRVAKEAQAPVLLVADIDRGGALASVVGTLELLEPEERQLVQGIVMNKFRGDIKLLQPALDFLEERTGIPVVGVVPFYDQFKIPEEDSVVLEEQNTSKRDQGKSRDEALDVAVIRLPYLSNFTDFDPFEDEPDVILRYVREPSELGEPDCVIIPGSKNTLSDLRFLWESGLGEKIIKFWQEDVPIIGICGGYQMLGRIVRDPLGTESDLKEIAGLGILPMETEFELDKHTVQSRGKVVGGELFLARCQGTEITGYEIHMGRSQGEGHSLFEIEAQETAYGDGMSAGSAVGTYLHGIFDNDPLRTALLEWLWERRGGTRPVGETMSQAAIREQSFNELADWVRNSMDMEKIRAMMGLHKG.

Residues 263–457 (ALDVAVIRLP…LHGIFDNDPL (195 aa)) enclose the GATase cobBQ-type domain. The active-site Nucleophile is the C344. H449 is an active-site residue.

This sequence belongs to the CobB/CobQ family. CobQ subfamily.

The protein operates within cofactor biosynthesis; adenosylcobalamin biosynthesis. In terms of biological role, catalyzes amidations at positions B, D, E, and G on adenosylcobyrinic A,C-diamide. NH(2) groups are provided by glutamine, and one molecule of ATP is hydrogenolyzed for each amidation. The polypeptide is Cobyric acid synthase (Desulfitobacterium hafniense (strain DSM 10664 / DCB-2)).